The sequence spans 199 residues: Pneumococcal vaccine antigen A homolog (199 aa).

It localises to the cell surface. This chain is Pneumococcal vaccine antigen A homolog (pvaA), found in Streptococcus pyogenes serotype M1.